Here is a 131-residue protein sequence, read N- to C-terminus: Large ribosomal subunit protein bL12 (131 aa).

This sequence belongs to the bacterial ribosomal protein bL12 family. In terms of assembly, homodimer. Part of the ribosomal stalk of the 50S ribosomal subunit. Forms a multimeric L10(L12)X complex, where L10 forms an elongated spine to which 2 to 4 L12 dimers bind in a sequential fashion. Binds GTP-bound translation factors.

Functionally, forms part of the ribosomal stalk which helps the ribosome interact with GTP-bound translation factors. Is thus essential for accurate translation. The sequence is that of Large ribosomal subunit protein bL12 from Prochlorococcus marinus (strain MIT 9515).